Reading from the N-terminus, the 556-residue chain is Arginine--tRNA ligase 2 (556 aa).

A 'HIGH' region motif is present at residues 132-142 (ANPTGDLHLGH).

This sequence belongs to the class-I aminoacyl-tRNA synthetase family. Monomer.

The protein resides in the cytoplasm. It catalyses the reaction tRNA(Arg) + L-arginine + ATP = L-arginyl-tRNA(Arg) + AMP + diphosphate. This Bacillus thuringiensis subsp. konkukian (strain 97-27) protein is Arginine--tRNA ligase 2.